The chain runs to 457 residues: ATP synthase subunit beta (457 aa).

147 to 154 provides a ligand contact to ATP; it reads GGAGVGKT.

The protein belongs to the ATPase alpha/beta chains family. F-type ATPases have 2 components, CF(1) - the catalytic core - and CF(0) - the membrane proton channel. CF(1) has five subunits: alpha(3), beta(3), gamma(1), delta(1), epsilon(1). CF(0) has three main subunits: a(1), b(2) and c(9-12). The alpha and beta chains form an alternating ring which encloses part of the gamma chain. CF(1) is attached to CF(0) by a central stalk formed by the gamma and epsilon chains, while a peripheral stalk is formed by the delta and b chains.

Its subcellular location is the cell inner membrane. It carries out the reaction ATP + H2O + 4 H(+)(in) = ADP + phosphate + 5 H(+)(out). Produces ATP from ADP in the presence of a proton gradient across the membrane. The catalytic sites are hosted primarily by the beta subunits. This is ATP synthase subunit beta from Haemophilus influenzae (strain 86-028NP).